The chain runs to 580 residues: Type II methyltransferase M.BanIII (580 aa).

It belongs to the N(4)/N(6)-methyltransferase family.

The catalysed reaction is a 2'-deoxyadenosine in DNA + S-adenosyl-L-methionine = an N(6)-methyl-2'-deoxyadenosine in DNA + S-adenosyl-L-homocysteine + H(+). Functionally, a gamma subtype methylase, recognizes the double-stranded sequence 5'-ATCGAT-3', methylates A-5 on both strands, and protects the DNA from cleavage by the BanIII endonuclease. The sequence is that of Type II methyltransferase M.BanIII (banIIIM) from Aneurinibacillus aneurinilyticus (Bacillus aneurinolyticus).